Here is a 609-residue protein sequence, read N- to C-terminus: Adenine deaminase (609 aa).

This sequence belongs to the metallo-dependent hydrolases superfamily. Adenine deaminase family. Mn(2+) serves as cofactor.

It catalyses the reaction adenine + H2O + H(+) = hypoxanthine + NH4(+). The chain is Adenine deaminase from Cenarchaeum symbiosum (strain A).